We begin with the raw amino-acid sequence, 735 residues long: E3 UFM1-protein ligase 1 homolog (735 aa).

The disordered stretch occupies residues 389-445; sequence RLEAEKKKQGGAKAAVKVQEETDDWGDGKKGGKGGKKNAKSVKGGSKSSAPSTSSNL. Residues 419-428 show a composition bias toward basic residues; the sequence is GGKGGKKNAK. Positions 429 to 445 are enriched in low complexity; it reads SVKGGSKSSAPSTSSNL.

Belongs to the UFL1 family.

E3 UFM1-protein ligase that mediates ufmylation of target proteins. This is E3 UFM1-protein ligase 1 homolog (ufl-1) from Caenorhabditis elegans.